The primary structure comprises 336 residues: Biotin synthase (336 aa).

One can recognise a Radical SAM core domain in the interval 55–288 (GEAASLHACS…RTIIKFAAGR (234 aa)). Residues C73, C77, and C80 each contribute to the [4Fe-4S] cluster site. 3 residues coordinate [2Fe-2S] cluster: C152, C213, and K283.

It belongs to the radical SAM superfamily. Biotin synthase family. In terms of assembly, homodimer. [4Fe-4S] cluster is required as a cofactor. It depends on [2Fe-2S] cluster as a cofactor.

The enzyme catalyses (4R,5S)-dethiobiotin + (sulfur carrier)-SH + 2 reduced [2Fe-2S]-[ferredoxin] + 2 S-adenosyl-L-methionine = (sulfur carrier)-H + biotin + 2 5'-deoxyadenosine + 2 L-methionine + 2 oxidized [2Fe-2S]-[ferredoxin]. Its pathway is cofactor biosynthesis; biotin biosynthesis; biotin from 7,8-diaminononanoate: step 2/2. In terms of biological role, catalyzes the conversion of dethiobiotin (DTB) to biotin by the insertion of a sulfur atom into dethiobiotin via a radical-based mechanism. This is Biotin synthase from Chlorobium limicola (strain DSM 245 / NBRC 103803 / 6330).